Here is a 57-residue protein sequence, read N- to C-terminus: Large ribosomal subunit protein bL32 (57 aa).

The segment covering 1-20 (MAVPKRRMSRSNTRSRRAQW) has biased composition (basic residues). The disordered stretch occupies residues 1 to 22 (MAVPKRRMSRSNTRSRRAQWKA).

Belongs to the bacterial ribosomal protein bL32 family.

This Mycobacterium sp. (strain JLS) protein is Large ribosomal subunit protein bL32.